A 292-amino-acid polypeptide reads, in one-letter code: Ribosomal protein L11 methyltransferase (292 aa).

The S-adenosyl-L-methionine site is built by T144, G165, D187, and N229.

This sequence belongs to the methyltransferase superfamily. PrmA family.

The protein localises to the cytoplasm. The enzyme catalyses L-lysyl-[protein] + 3 S-adenosyl-L-methionine = N(6),N(6),N(6)-trimethyl-L-lysyl-[protein] + 3 S-adenosyl-L-homocysteine + 3 H(+). Functionally, methylates ribosomal protein L11. In Pseudomonas syringae pv. tomato (strain ATCC BAA-871 / DC3000), this protein is Ribosomal protein L11 methyltransferase.